Reading from the N-terminus, the 313-residue chain is tRNA-cytidine(32) 2-sulfurtransferase (313 aa).

The short motif at 50 to 55 (SGGKDS) is the PP-loop motif element. [4Fe-4S] cluster-binding residues include C125, C128, and C216.

The protein belongs to the TtcA family. Homodimer. Mg(2+) is required as a cofactor. The cofactor is [4Fe-4S] cluster.

The protein localises to the cytoplasm. It carries out the reaction cytidine(32) in tRNA + S-sulfanyl-L-cysteinyl-[cysteine desulfurase] + AH2 + ATP = 2-thiocytidine(32) in tRNA + L-cysteinyl-[cysteine desulfurase] + A + AMP + diphosphate + H(+). The protein operates within tRNA modification. Its function is as follows. Catalyzes the ATP-dependent 2-thiolation of cytidine in position 32 of tRNA, to form 2-thiocytidine (s(2)C32). The sulfur atoms are provided by the cysteine/cysteine desulfurase (IscS) system. The polypeptide is tRNA-cytidine(32) 2-sulfurtransferase (Haemophilus influenzae (strain ATCC 51907 / DSM 11121 / KW20 / Rd)).